The primary structure comprises 158 residues: Peptide methionine sulfoxide reductase MsrA (158 aa).

The active site involves cysteine 10.

Belongs to the MsrA Met sulfoxide reductase family.

The enzyme catalyses L-methionyl-[protein] + [thioredoxin]-disulfide + H2O = L-methionyl-(S)-S-oxide-[protein] + [thioredoxin]-dithiol. It carries out the reaction [thioredoxin]-disulfide + L-methionine + H2O = L-methionine (S)-S-oxide + [thioredoxin]-dithiol. Its function is as follows. Has an important function as a repair enzyme for proteins that have been inactivated by oxidation. Catalyzes the reversible oxidation-reduction of methionine sulfoxide in proteins to methionine. This chain is Peptide methionine sulfoxide reductase MsrA, found in Alkaliphilus metalliredigens (strain QYMF).